The primary structure comprises 664 residues: Macoilin (664 aa).

The next 4 helical transmembrane spans lie at 28–48 (TFLY…DFVL), 75–95 (AFSV…LLFI), 120–140 (VCLP…AIRF), and 154–174 (FAAH…KSYV). Over residues 253 to 265 (REKGKEKDKDAKK) the composition is skewed to basic and acidic residues. The tract at residues 253-274 (REKGKEKDKDAKKHNLGINNNN) is disordered. At Ser-305 the chain carries Phosphoserine. Residues 320–348 (KNYKNASGVVNSSPRSHSATNGSIPSSSS) show a composition bias toward polar residues. The segment at 320 to 367 (KNYKNASGVVNSSPRSHSATNGSIPSSSSKNEKKQKCTSKSPSAHKDL) is disordered. An N-linked (GlcNAc...) asparagine glycan is attached at Asn-324. A Phosphoserine modification is found at Ser-332. Residues Asn-340 and Asn-452 are each glycosylated (N-linked (GlcNAc...) asparagine). Phosphoserine occurs at positions 631 and 634. A disordered region spans residues 631 to 664 (SPLSPVSPHYSSKFVETSPSGLDPNASVYQPLKK). Asn-655 carries an N-linked (GlcNAc...) asparagine glycan.

This sequence belongs to the macoilin family.

The protein resides in the rough endoplasmic reticulum membrane. It localises to the nucleus membrane. In terms of biological role, plays a role in the regulation of neuronal activity. This is Macoilin (MACO1) from Bos taurus (Bovine).